A 120-amino-acid chain; its full sequence is Immunogenic miracidial antigen 5D (120 aa).

The tract at residues 41 to 120 (HIDVGDEDYH…PKKYGSGYKH (80 aa)) is disordered. Residues 45 to 66 (GDEDYHDGDDDVDYTDDVDDVD) show a composition bias toward acidic residues.

The protein belongs to the immunogenic miracidial antigen family.

In Schistosoma japonicum (Blood fluke), this protein is Immunogenic miracidial antigen 5D (5D).